The following is a 473-amino-acid chain: Glutamate--tRNA ligase (473 aa).

The 'HIGH' region signature appears at 11–21 (PSPTGFLHIGG). The short motif at 240 to 244 (KLSKR) is the 'KMSKS' region element. Lysine 243 is an ATP binding site.

It belongs to the class-I aminoacyl-tRNA synthetase family. Glutamate--tRNA ligase type 1 subfamily. In terms of assembly, monomer.

The protein resides in the cytoplasm. The catalysed reaction is tRNA(Glu) + L-glutamate + ATP = L-glutamyl-tRNA(Glu) + AMP + diphosphate. Functionally, catalyzes the attachment of glutamate to tRNA(Glu) in a two-step reaction: glutamate is first activated by ATP to form Glu-AMP and then transferred to the acceptor end of tRNA(Glu). This Afipia carboxidovorans (strain ATCC 49405 / DSM 1227 / KCTC 32145 / OM5) (Oligotropha carboxidovorans) protein is Glutamate--tRNA ligase.